A 173-amino-acid chain; its full sequence is Thaumatin-like protein PWIR2 (173 aa).

An N-terminal signal peptide occupies residues methionine 1–alanine 20.

It belongs to the thaumatin family.

This chain is Thaumatin-like protein PWIR2, found in Triticum aestivum (Wheat).